Consider the following 978-residue polypeptide: Serine/threonine-protein kinase PLK4 (978 aa).

Residues 13–266 (FQVLDLLGKG…LSGILDHPFI (254 aa)) enclose the Protein kinase domain. ATP is bound by residues 19–27 (LGKGGFACV) and K42. Residue D137 is the Proton acceptor of the active site. 2 stretches are compositionally biased toward polar residues: residues 271 to 282 (LNTKYSSPTRQH) and 291 to 304 (SLDSGTGTMATIST). 4 disordered regions span residues 271-381 (LNTK…TRTS), 489-578 (IEQP…AERL), 788-818 (AWKNSSGKSEKQDQQGCSNGQSQPVLPSSPS), and 838-869 (AQTTNPAFPGKSRKTSPSKTSRHKQSPAQPIP). Basic and acidic residues predominate over residues 324 to 335 (RTSDIWPRDPKH). Composition is skewed to polar residues over residues 351–362 (TENVTTGSSSHV) and 371–381 (AQYSGLKTRTS). Basic and acidic residues-rich tracts occupy residues 518 to 527 (GSDSVSKDFD) and 536 to 566 (ESRRRQNHRSDSERQTRRAEKSRSGGRDKSL). The Cryptic POLO box 1 (CPB1) domain occupies 565 to 678 (SLGELTEPLN…AKFVQLVRKL (114 aa)). Residues 679-792 (TPKVTLYSKH…GRRPPAWKNS (114 aa)) form the Cryptic POLO box 2 (CPB2) domain. Residues 801–818 (QQGCSNGQSQPVLPSSPS) are compositionally biased toward polar residues. A compositionally biased stretch (basic residues) spans 848 to 862 (KSRKTSPSKTSRHKQ). The region spanning 895–973 (HVCKMAFVDG…LPAVIKTLAT (79 aa)) is the POLO box domain.

The protein belongs to the protein kinase superfamily. Ser/Thr protein kinase family. CDC5/Polo subfamily. Homodimer. Post-translationally, ubiquitinated; leading to its degradation by the proteasome.

It localises to the cytoplasm. The protein localises to the cytoskeleton. It is found in the microtubule organizing center. Its subcellular location is the centrosome. The protein resides in the centriole. The catalysed reaction is L-seryl-[protein] + ATP = O-phospho-L-seryl-[protein] + ADP + H(+). The enzyme catalyses L-threonyl-[protein] + ATP = O-phospho-L-threonyl-[protein] + ADP + H(+). In terms of biological role, serine/threonine-protein kinase that plays a central role in centriole duplication. Able to trigger procentriole formation on the surface of the mother centriole cylinder, leading to the recruitment of centriole biogenesis proteins. When overexpressed, it is able to induce centrosome amplification through the simultaneous generation of multiple procentrioles adjoining each parental centriole during S phase. In Nematostella vectensis (Starlet sea anemone), this protein is Serine/threonine-protein kinase PLK4.